The primary structure comprises 52 residues: MSGRGKTGGKARAKAKTRSSRAGLQFPVGRVHRLLRKGNYAHRVGAGAPVYL.

Residues 1–25 (MSGRGKTGGKARAKAKTRSSRAGLQ) form a disordered region. An N-acetylserine modification is found at serine 2. Residue serine 2 is modified to Phosphoserine. At lysine 6 the chain carries N6-(2-hydroxyisobutyryl)lysine. Position 6 is an N6-acetyllysine (lysine 6). Residues 7-19 (TGGKARAKAKTRS) are compositionally biased toward basic residues. The residue at position 10 (lysine 10) is an N6-(2-hydroxyisobutyryl)lysine; alternate. Position 10 is an N6-lactoyllysine; alternate (lysine 10). Residue lysine 10 is modified to N6-succinyllysine. Residues lysine 14 and lysine 16 each participate in a glycyl lysine isopeptide (Lys-Gly) (interchain with G-Cter in ubiquitin) cross-link. At lysine 37 the chain carries N6-(2-hydroxyisobutyryl)lysine; alternate.

In terms of assembly, the nucleosome is a histone octamer containing two molecules each of H2A, H2B, H3 and H4 assembled in one H3-H4 heterotetramer and two H2A-H2B heterodimers. The octamer wraps approximately 147 bp of DNA. Acetylation is not necessary for the antibacterial activity. Post-translationally, monoubiquitination in C-terminus gives a specific tag for epigenetic transcriptional repression. Following DNA double-strand breaks (DSBs), it is ubiquitinated through 'Lys-63' linkage of ubiquitin moieties, leading to the recruitment of repair proteins to sites of DNA damage. H2AK119Ub and ionizing radiation-induced 'Lys-63'-linked ubiquitination are distinct events. In terms of processing, phosphorylation on Ser-2 is enhanced during mitosis. Phosphorylation on Ser-2 directly represses transcription.

The protein resides in the nucleus. Its subcellular location is the chromosome. It is found in the secreted. Its function is as follows. Core component of nucleosome. Nucleosomes wrap and compact DNA into chromatin, limiting DNA accessibility to the cellular machineries which require DNA as a template. Histones thereby play a central role in transcription regulation, DNA repair, DNA replication and chromosomal stability. DNA accessibility is regulated via a complex set of post-translational modifications of histones, also called histone code, and nucleosome remodeling. Hipposin shows strong antimicrobial activity against several Gram-positive and Gram-negative bacteria. The sequence is that of Histone H2A from Hippoglossus hippoglossus (Atlantic halibut).